The chain runs to 116 residues: Small ribosomal subunit protein uS13m (116 aa).

It belongs to the universal ribosomal protein uS13 family. Part of the small ribosomal subunit.

The protein localises to the mitochondrion. Functionally, located at the top of the head of the small subunit, it contacts several helices of the 18S rRNA. The sequence is that of Small ribosomal subunit protein uS13m (RPS13) from Daucus carota (Wild carrot).